Consider the following 585-residue polypeptide: MNIFADFDARIKKTLQDIDLKPKDGGELDLSRIGVEPPRDASHGDIATNAAMVLSKAVGQNPRELAARIAEALKADEDVESVDVAGPGFINLRLKASYWQRELLVMLNEGTDFGRSRLGAGKKVNVEYVSANPTGPMHVGHCRGAVVGDVLANLLKFAGYDVVKEYYINDAGAQIDVLARSVMLRYREALGESIGEIPAGLYPGDYLVRVGQELAGEFGTKLLEMPEAEALAIVKDRTIDAMMAMIRADLDALNVHHDVFYSERKLHVDHARAIRNAINDLTLKGHVYKGKLPPPKGQLPEDWEDREQTLFRSTEVGDDIDRPLMKSDGSFTYFAGDVAYFKDKYDRGFNEMIYVLGADHGGYVKRLEAVARAVSDGKAKLTVLLCQLVKLFRNGEPVRMSKRAGEFITLRDVVDEVGRDPVRFMMLYRKNDAPLDFDFAKVTEQSKDNPVFYVQYASARCHSVFRQAADQLGLVDLDRVAMGSHFEKLTDESEIALVRKLAEYPRLIESAAIHQEPHRLAFYLYDLASSFHSQWNRGTENPDLRFIKVNDPDLSLARLGLVQVVSDVLTSGLTIIGADAPTEMR.

The 'HIGH' region motif lies at 131–141 (ANPTGPMHVGH).

The protein belongs to the class-I aminoacyl-tRNA synthetase family. In terms of assembly, monomer.

Its subcellular location is the cytoplasm. The enzyme catalyses tRNA(Arg) + L-arginine + ATP = L-arginyl-tRNA(Arg) + AMP + diphosphate. The protein is Arginine--tRNA ligase of Brucella canis (strain ATCC 23365 / NCTC 10854 / RM-666).